The chain runs to 46 residues: Mu-segestritoxin-Sf1c (46 aa).

4 disulfide bridges follow: Cys-3-Cys-19, Cys-10-Cys-22, Cys-18-Cys-42, and Cys-24-Cys-40. The interval 31-33 is keys region for toxin activity; it reads RPW.

This sequence belongs to the neurotoxin 16 (SFI) family. As to expression, expressed by the venom gland.

The protein localises to the secreted. Insecticidal toxin. It inhibits insect voltage-gated sodium channels (Nav) by partially blocking the channel pore in DUM neurons from the American cockroach, not by acting as a gating modifier. The inhibition is only partially reversible after prolonged washout. In vivo, the toxin causes flaccid paralysis followed by death when injected into Heliothis virescens larvae. It also causes uncoordinated movements followed by full paralysis to sheep blowflies (Lucilia cuprina). When the toxin is fused to snowdrop lectin, it is orally active against larvae of the tomato moth (Laconobia oleracea), the rice brown planthopper (Nilaparvata lugens), and the peach-potato aphid (Myzus persicae). The protein is Mu-segestritoxin-Sf1c of Segestria florentina (Tube-web spider).